The following is a 233-amino-acid chain: Type II methyltransferase M.MunI (233 aa).

Belongs to the MT-A70-like family.

The catalysed reaction is a 2'-deoxyadenosine in DNA + S-adenosyl-L-methionine = an N(6)-methyl-2'-deoxyadenosine in DNA + S-adenosyl-L-homocysteine + H(+). Functionally, a methylase that recognizes the double-stranded sequence 5'-CAATTG-3', methylates A-3 on both strands, and protects the DNA from cleavage by the MunI endonuclease. The polypeptide is Type II methyltransferase M.MunI (Mycoplasma sp).